Reading from the N-terminus, the 201-residue chain is Pro-P-factor (201 aa).

A signal peptide spans methionine 1–proline 20. 5 propeptides span residues valine 21 to lysine 31, glutamate 58 to lysine 65, glutamate 92 to lysine 99, glutamate 126 to lysine 133, and threonine 160 to serine 201. 2 N-linked (GlcNAc...) asparagine glycosylation sites follow: asparagine 187 and asparagine 194.

Post-translationally, proteolytically cleaved by kpr, probably at the C-terminal side of dibasic Lys-Arg residues. In terms of processing, glycosylated. Most of the precursor molecules are glycosylated on at least one site, but only a small proportion are glycosylated on both sites.

Its subcellular location is the secreted. Its function is as follows. In h- cells under nutritional starvation, P-factor induces alteration of cell morphology toward mating, arrest of the cell cycle at the G1 phase prior to the initiation of DNA synthesis and indirect transcriptional activation of the sxa2 gene which down-regulates the signaling pathway. The sequence is that of Pro-P-factor (map2) from Schizosaccharomyces pombe (strain 972 / ATCC 24843) (Fission yeast).